Consider the following 507-residue polypeptide: MENNEKYIITLDSGTTSCRSLIVNKKGEIIAIAQNEFSQYFPKSGWVEHDPLEIWNTQLSTMQSVKNKAQIKSSDIVALGITNQRETIVVWDKDTGLPVYNAIVWQDVRTSSFCDQMIAENKTEFFREKTGLIINPYFSATKLKWILENVPLAKEKLAKGKLLAGTIDTWLIWKLTGGKVHASDVSNASRTMLFNIHSLDWDQEILDYLKIPRSILPKVQASSEFYGFVQSSLWSNKAKGKVPITGVAGDQQSALFGQMCTEVGMVKNTYGTGCFTLVNTGQKPVNSKNRLLTTIAWKLGNEKTIYALEGSVFVAGAAIQWLRDSLRILYNAALSDFYSSLVKDNQRVYVVPAFTGLGAPYWDSYAKGAIFGLERGTKNEHIIKATLESIAYQSNDLIKAMEKDLGQKITLLKVDGGASKSDYLMNFQASISNLDVHRPANVETTALGAAYLAGLAVGFWKDIKEIQKMIKIDHQFKPSVDQKEVDVLLKGWNEAVKRVLNWQKDIE.

T15 is an ADP binding site. Residues T15, T16, and S17 each contribute to the ATP site. A sn-glycerol 3-phosphate-binding site is contributed by T15. R19 serves as a coordination point for ADP. Sn-glycerol 3-phosphate-binding residues include R85, E86, Y137, and D250. Glycerol is bound by residues R85, E86, Y137, D250, and Q251. ADP contacts are provided by T272 and G316. ATP contacts are provided by T272, G316, Q320, and G417. G417 serves as a coordination point for ADP.

Belongs to the FGGY kinase family.

The catalysed reaction is glycerol + ATP = sn-glycerol 3-phosphate + ADP + H(+). It functions in the pathway polyol metabolism; glycerol degradation via glycerol kinase pathway; sn-glycerol 3-phosphate from glycerol: step 1/1. With respect to regulation, inhibited by fructose 1,6-bisphosphate (FBP). Its function is as follows. Key enzyme in the regulation of glycerol uptake and metabolism. Catalyzes the phosphorylation of glycerol to yield sn-glycerol 3-phosphate. The sequence is that of Glycerol kinase from Mycoplasmopsis pulmonis (strain UAB CTIP) (Mycoplasma pulmonis).